Here is a 317-residue protein sequence, read N- to C-terminus: MRFVGNRVVLIGAGDVGVAYAYALVNQGIADELCIIDIDEKKLEGNVMDLSHGVVWAGKRTKVRKGTYSDCEDAAMVVICAGAAQKPGETRLQLVDKNVNIMHTIVDEVMANGFDGLFLVATNPVDILTYAVWKFSGLDHSRVIGSGTVLDTARFRYMLGELYDVSPKSIHAYIIGEHGDTELPVLSSATIAGVSMRKMLEKDPELEPRLEKIFEDTRDAAYRIIDAKGSTSYGIGMGLARITRAILNNQDVALPVSAYLEGQYGEEDIYIGTPAIIDRSGIHRVVELEISDREMSRFKHSAQTLRAIKDEIFPVGE.

Residues valine 16, aspartate 37, lysine 42, tyrosine 68, and 82–83 each bind NAD(+); that span reads GA. Substrate-binding residues include glutamine 85 and arginine 91. Residues threonine 104, 121–123, and serine 146 each bind NAD(+); that span reads ATN. 123-126 is a substrate binding site; sequence NPVD. 151 to 154 is a binding site for substrate; the sequence is DTAR. 2 residues coordinate beta-D-fructose 1,6-bisphosphate: arginine 156 and histidine 171. The active-site Proton acceptor is histidine 178. A Phosphotyrosine modification is found at tyrosine 222. Threonine 231 provides a ligand contact to substrate.

Belongs to the LDH/MDH superfamily. LDH family. As to quaternary structure, homotetramer.

The protein localises to the cytoplasm. It catalyses the reaction (S)-lactate + NAD(+) = pyruvate + NADH + H(+). Its pathway is fermentation; pyruvate fermentation to lactate; (S)-lactate from pyruvate: step 1/1. With respect to regulation, allosterically activated by fructose 1,6-bisphosphate (FBP). Its function is as follows. Catalyzes the conversion of lactate to pyruvate. The chain is L-lactate dehydrogenase from Corynebacterium efficiens (strain DSM 44549 / YS-314 / AJ 12310 / JCM 11189 / NBRC 100395).